A 309-amino-acid polypeptide reads, in one-letter code: Taste receptor type 2 member 20 (309 aa).

The Extracellular segment spans residues 1–6 (MMSFLH). Residues 7 to 27 (IVFSILVVVAFILGNFANGFI) form a helical membrane-spanning segment. The Cytoplasmic portion of the chain corresponds to 28–46 (ALINFIAWVKRQKISSADQ). A helical transmembrane segment spans residues 47–67 (IIAALAVSRVGLLWVILLHWY). Topologically, residues 68–79 (STVLNPTSSNLK) are extracellular. A helical transmembrane segment spans residues 80-100 (VIIFISNAWAVTNHFSIWLAT). The Cytoplasmic segment spans residues 101-125 (SLSIFYLLKIVNFSRLIFHHLKRKA). Residues 126–146 (KSVVLVIVLGSLFFLVCHLVM) form a helical membrane-spanning segment. The Extracellular segment spans residues 147-178 (KHTYINVWTEECEGNVTWKIKLRNAMHLSNLT). N-linked (GlcNAc...) asparagine glycans are attached at residues Asn-161 and Asn-176. Residues 179–199 (VAMLANLIPFTLTLISFLLLI) form a helical membrane-spanning segment. The Cytoplasmic segment spans residues 200 to 229 (YSLCKHLKKMQLHGKGSQDPSTKIHIKALQ). A helical transmembrane segment spans residues 230–250 (TVTSFLILLAIYFLCLIISFW). Residues 251–259 (NFKMRPKEI) are Extracellular-facing. The chain crosses the membrane as a helical span at residues 260 to 280 (VLMLCQAFGIIYPSFHSFILI). Residues 281–309 (WGNKTLKQTFLSVLWQVTCWAKGQNQSTP) lie on the Cytoplasmic side of the membrane.

It belongs to the G-protein coupled receptor T2R family. In terms of tissue distribution, expressed in subsets of taste receptor cells of the tongue and exclusively in gustducin-positive cells.

Its subcellular location is the membrane. Functionally, receptor that may play a role in the perception of bitterness and is gustducin-linked. May play a role in sensing the chemical composition of the gastrointestinal content. The activity of this receptor may stimulate alpha gustducin, mediate PLC-beta-2 activation and lead to the gating of TRPM5. This chain is Taste receptor type 2 member 20 (TAS2R20), found in Homo sapiens (Human).